The following is a 238-amino-acid chain: tRNA (guanine-N(7)-)-methyltransferase (238 aa).

The S-adenosyl-L-methionine site is built by glutamate 68, glutamate 93, aspartate 120, and aspartate 143. Residue aspartate 143 is part of the active site. Residues lysine 147, aspartate 179, and 216–219 (TKFE) contribute to the substrate site.

Belongs to the class I-like SAM-binding methyltransferase superfamily. TrmB family.

It catalyses the reaction guanosine(46) in tRNA + S-adenosyl-L-methionine = N(7)-methylguanosine(46) in tRNA + S-adenosyl-L-homocysteine. Its pathway is tRNA modification; N(7)-methylguanine-tRNA biosynthesis. Functionally, catalyzes the formation of N(7)-methylguanine at position 46 (m7G46) in tRNA. This Shewanella sp. (strain MR-4) protein is tRNA (guanine-N(7)-)-methyltransferase.